The sequence spans 180 residues: Adenine phosphoribosyltransferase (180 aa).

It belongs to the purine/pyrimidine phosphoribosyltransferase family. Homodimer.

It localises to the cytoplasm. It catalyses the reaction AMP + diphosphate = 5-phospho-alpha-D-ribose 1-diphosphate + adenine. The protein operates within purine metabolism; AMP biosynthesis via salvage pathway; AMP from adenine: step 1/1. In terms of biological role, catalyzes a salvage reaction resulting in the formation of AMP, that is energically less costly than de novo synthesis. The protein is Adenine phosphoribosyltransferase of Mycobacterium avium (strain 104).